The following is a 381-amino-acid chain: uncharacterized protein (381 aa).

Disordered regions lie at residues 1 to 20 and 36 to 381; these read MPYYTRDDNDVDDFDEFDPT and IPPS…EDDE. Residues 9-18 show a composition bias toward acidic residues; the sequence is NDVDDFDEFD. 2 stretches are compositionally biased toward basic and acidic residues: residues 166–175 and 186–237; these read TEVEYGRRPE and SESE…EGYR. A phosphoserine mark is found at Ser339, Ser346, and Ser357. Residues 364-374 show a composition bias toward basic residues; the sequence is KKHRHKHHHQK.

This is an uncharacterized protein from Arabidopsis thaliana (Mouse-ear cress).